A 206-amino-acid polypeptide reads, in one-letter code: Regulatory protein CysR (206 aa).

An HTH crp-type domain is found at 120 to 196; that stretch reads RRAEAKLASL…DRALIVRYPE (77 aa). A DNA-binding region (H-T-H motif) is located at residues 156 to 175; it reads HQVIAELSGSTRVTTTRLLG.

Its subcellular location is the cytoplasm. Functionally, probably regulates the expression of genes from the sulfate permease complex. In Synechococcus elongatus (strain ATCC 33912 / PCC 7942 / FACHB-805) (Anacystis nidulans R2), this protein is Regulatory protein CysR (cysR).